The following is a 206-amino-acid chain: Superoxide dismutase [Mn] (206 aa).

Residues H27, H82, D168, and H172 each coordinate Mn(2+).

The protein belongs to the iron/manganese superoxide dismutase family. As to quaternary structure, homodimer. Mn(2+) is required as a cofactor.

It catalyses the reaction 2 superoxide + 2 H(+) = H2O2 + O2. Destroys superoxide anion radicals which are normally produced within the cells and which are toxic to biological systems. The protein is Superoxide dismutase [Mn] (sodA) of Escherichia coli (strain K12).